A 231-amino-acid polypeptide reads, in one-letter code: Lytic polysaccharide monooxygenase-like protein X325 (231 aa).

Residues methionine 1 to alanine 17 form the signal peptide. Position 18 (histidine 18) interacts with Cu(2+). Residues asparagine 34, asparagine 55, asparagine 98, asparagine 133, asparagine 174, and asparagine 180 are each glycosylated (N-linked (GlcNAc...) asparagine). 2 disulfides stabilise this stretch: cysteine 47-cysteine 157 and cysteine 122-cysteine 178. A lipid anchor (GPI-anchor amidated isoleucine) is attached at isoleucine 202. A propeptide spans alanine 203 to leucine 231 (removed in mature form).

This sequence belongs to the X325 family. It depends on Cu(2+) as a cofactor.

The protein localises to the cell membrane. Functionally, lytic polysaccharide monooxygenase-like protein that has diverged to biological functions other than polysaccharide degradation since it does not perform oxidative cleavage of polysaccharides. Acts as a cell surface-bound protein that functions in the copper-accumulation pathway. May also act as the major cell wall sensor that regulates MAP kinase-dependent hyphal anastomosis, the fusion of hyphal cells. The sequence is that of Lytic polysaccharide monooxygenase-like protein X325 from Hypocrea jecorina (strain QM6a) (Trichoderma reesei).